The chain runs to 205 residues: Large ribosomal subunit protein bL25 (205 aa).

The segment at 184–205 (QPAGAVSEAAEGGEAAGETPAA) is disordered. Residues 186 to 205 (AGAVSEAAEGGEAAGETPAA) are compositionally biased toward low complexity.

The protein belongs to the bacterial ribosomal protein bL25 family. CTC subfamily. As to quaternary structure, part of the 50S ribosomal subunit; part of the 5S rRNA/L5/L18/L25 subcomplex. Contacts the 5S rRNA. Binds to the 5S rRNA independently of L5 and L18.

This is one of the proteins that binds to the 5S RNA in the ribosome where it forms part of the central protuberance. The chain is Large ribosomal subunit protein bL25 from Cupriavidus necator (strain ATCC 17699 / DSM 428 / KCTC 22496 / NCIMB 10442 / H16 / Stanier 337) (Ralstonia eutropha).